Consider the following 109-residue polypeptide: uncharacterized protein (109 aa).

Residues 63–85 (LFVKTFFACTYIIMLAFQVYIFL) traverse the membrane as a helical segment.

Its subcellular location is the membrane. This is an uncharacterized protein from Saccharomyces cerevisiae (strain ATCC 204508 / S288c) (Baker's yeast).